Here is a 120-residue protein sequence, read N- to C-terminus: Large ribosomal subunit protein uL18 (120 aa).

Belongs to the universal ribosomal protein uL18 family. In terms of assembly, part of the 50S ribosomal subunit; part of the 5S rRNA/L5/L18/L25 subcomplex. Contacts the 5S and 23S rRNAs.

Its function is as follows. This is one of the proteins that bind and probably mediate the attachment of the 5S RNA into the large ribosomal subunit, where it forms part of the central protuberance. This is Large ribosomal subunit protein uL18 from Brucella suis biovar 1 (strain 1330).